A 235-amino-acid chain; its full sequence is Rab-like protein 3 (235 aa).

Residues 1–235 (MASLDRVKVL…GGNFKSLHYD (235 aa)) are small GTPase-like. GTP contacts are provided by residues 16–21 (GVGKSS), 148–150 (KLD), and 179–180 (DC).

This sequence belongs to the small GTPase superfamily. Rab family. As to quaternary structure, homodimer.

Its function is as follows. Required for KRAS signaling regulation and modulation of cell proliferation. Regulator of KRAS prenylation, and probably prenylation of other small GTPases. Required for lymphocyte development and function. Not required for myeloid cell development. The chain is Rab-like protein 3 (rabl3) from Xenopus laevis (African clawed frog).